The chain runs to 102 residues: MKHLSIFFVFFCCICVMLCDAYGDCKKNSDCKAGECCVNTPPFARSTCQKYLQQGEFCAHMGKYNPLGKYINMCPCGKGLKCQLKDVSGPLALFRSRMLTCV.

An N-terminal signal peptide occupies residues 1-21; that stretch reads MKHLSIFFVFFCCICVMLCDA.

This sequence belongs to the neurotoxin 20 family. In terms of tissue distribution, expressed by the venom gland.

Its subcellular location is the secreted. The polypeptide is U3-aranetoxin-Ce1a (Caerostris extrusa (Bark spider)).